We begin with the raw amino-acid sequence, 222 residues long: Coiled-coil domain-containing protein 43 (222 aa).

A Glycyl lysine isopeptide (Lys-Gly) (interchain with G-Cter in SUMO1) cross-link involves residue Lys93. A coiled-coil region spans residues 119–143; it reads SEEEKQRKAALLAQYADVTDEEDEA. The interval 136–222 is disordered; that stretch reads VTDEEDEADK…KRTQKGERKR (87 aa). At Thr137 the chain carries Phosphothreonine. Residues 152 to 168 show a composition bias toward polar residues; sequence STANVSSDRTLFRNTNV. Residues 172–209 show a composition bias toward basic and acidic residues; sequence LNARKLERDSLRDESQRKKEQDKLQREKDKLAKQERKE. The stretch at 175 to 217 forms a coiled coil; the sequence is RKLERDSLRDESQRKKEQDKLQREKDKLAKQERKEKEKKRTQK. A compositionally biased stretch (basic residues) spans 210 to 222; that stretch reads KEKKRTQKGERKR.

Belongs to the CCDC43 family.

The sequence is that of Coiled-coil domain-containing protein 43 (Ccdc43) from Mus musculus (Mouse).